Reading from the N-terminus, the 136-residue chain is Large-conductance mechanosensitive channel (136 aa).

The next 4 membrane-spanning stretches (helical) occupy residues 9–29 (AFAS…GAAF), 32–52 (IVSS…LGGV), 54–74 (FSDL…VVIA), and 79–99 (IQTV…LKAI).

It belongs to the MscL family. As to quaternary structure, homopentamer.

It is found in the cell inner membrane. Functionally, channel that opens in response to stretch forces in the membrane lipid bilayer. May participate in the regulation of osmotic pressure changes within the cell. In Shewanella oneidensis (strain ATCC 700550 / JCM 31522 / CIP 106686 / LMG 19005 / NCIMB 14063 / MR-1), this protein is Large-conductance mechanosensitive channel.